We begin with the raw amino-acid sequence, 862 residues long: Piwi-like protein 1 (862 aa).

Positions 1–13 (MTGRARARARGRA) are enriched in basic residues. A disordered region spans residues 1–48 (MTGRARARARGRARGQETVQHVGAAASQQPGYIPPRPQQSPTEGDLVG). R14 carries the post-translational modification Omega-N-methylarginine; by PRMT5; alternate. R14 bears the Symmetric dimethylarginine; by PRMT5; alternate mark. R49 is modified (omega-N-methylarginine; by PRMT5). R53 is subject to Omega-N-methylarginine; alternate. R53 is modified (symmetric dimethylarginine; alternate). Residues 218–225 (RRLLKIMN) carry the D-box motif. The PAZ domain occupies 279–392 (TVLDFMFNLY…LIPELCYLTG (114 aa)). A required for binding 2'-O-methylated 3'-end of piRNAs region spans residues 317-319 (TYR). R371 bears the Omega-N-methylarginine; by PRMT5 mark. The segment at 480–616 (SKETRGAPLI…LQMNCKMGGE (137 aa)) is MID region. One can recognise a Piwi domain in the interval 556-848 (IVVCLLSSNR…LAFLVGQSIH (293 aa)). Active-site residues include D633, E671, D703, and H837.

This sequence belongs to the argonaute family. Piwi subfamily. Interacts (via Piwi domain) with DICER1, suggesting that it forms ribonucleoprotein RISC complexes; this interaction is regulated by HSP90AB1 activity. Interacts with MAEL, KIF17, PABPC1, PRMT5 and WDR77. Interacts (when methylated on arginine residues) with TDRD1, TDRKH/TDRD2, RNF17/TDRD4, TDRD6, TDRD7 and TDRD9. Interacts with CLOCK. Interacts with MOV10L1. Interacts with ANAPC10; interaction oly takes place following piRNA-binding. Interacts with RNF8; leading to sequester RNF8 in the cytoplasm. Interacts with Tex19.1 and, probably, Tex19.2. It depends on Mg(2+) as a cofactor. Ubiquitinated by the anaphase promoting complex/cyclosome (APC/C) in late spermatids, leading to its degradation. Ubiquitination only takes place following piRNA-binding in adult testis. Ubiquitination and degradation in late spermatogenesis by APC/C is probably required to release RNF8 from the cytoplasm and promote histone to protamine exchange by RNF8. In terms of processing, arginine methylation by PRMT5 is required for the interaction with Tudor domain-containing protein (TDRD1, TDRKH/TDRD2, RNF17/TDRD4, TDRD6, TDRD7 and TDRD9) and subsequent localization to the meiotic nuage, also named P granule. Expressed in brain. Expressed in testis, specifically in spermatocytes (at protein level). Only detected in germ lineage cells of adult testis. Expressed in male gonads 2 weeks after birth at the initiation of spermatogenesis, but not expressed in female gonads.

Its subcellular location is the cytoplasm. Endoribonuclease that plays a central role in postnatal germ cells by repressing transposable elements and preventing their mobilization, which is essential for the germline integrity. Acts via the piRNA metabolic process, which mediates the repression of transposable elements during meiosis by forming complexes composed of piRNAs and Piwi proteins and governs the methylation and subsequent repression of transposons. Directly binds methylated piRNAs, a class of 24 to 30 nucleotide RNAs that are generated by a Dicer-independent mechanism and are primarily derived from transposons and other repeated sequence elements. Strongly prefers a uridine in the first position of their guide (g1U preference, also named 1U-bias). Not involved in the piRNA amplification loop, also named ping-pong amplification cycle. Acts as an endoribonuclease that cleaves transposon messenger RNAs. Besides their function in transposable elements repression, piRNAs are probably involved in other processes during meiosis such as translation regulation. Probable component of some RISC complex, which mediates RNA cleavage and translational silencing. Also plays a role in the formation of chromatoid bodies and is required for some miRNAs stability. Required to sequester RNF8 in the cytoplasm until late spermatogenesis; RNF8 being released upon ubiquitination and degradation of PIWIL1. The chain is Piwi-like protein 1 from Mus musculus (Mouse).